The primary structure comprises 364 residues: tRNA 2-selenouridine synthase (364 aa).

The region spanning 14–137 is the Rhodanese domain; that stretch reads LLADTPLIDV…LRQTAIQATW (124 aa). The active-site S-selanylcysteine intermediate is the C97.

It belongs to the SelU family. In terms of assembly, monomer.

The enzyme catalyses 5-methylaminomethyl-2-thiouridine(34) in tRNA + selenophosphate + (2E)-geranyl diphosphate + H2O + H(+) = 5-methylaminomethyl-2-selenouridine(34) in tRNA + (2E)-thiogeraniol + phosphate + diphosphate. It carries out the reaction 5-methylaminomethyl-2-thiouridine(34) in tRNA + (2E)-geranyl diphosphate = 5-methylaminomethyl-S-(2E)-geranyl-thiouridine(34) in tRNA + diphosphate. It catalyses the reaction 5-methylaminomethyl-S-(2E)-geranyl-thiouridine(34) in tRNA + selenophosphate + H(+) = 5-methylaminomethyl-2-(Se-phospho)selenouridine(34) in tRNA + (2E)-thiogeraniol. The catalysed reaction is 5-methylaminomethyl-2-(Se-phospho)selenouridine(34) in tRNA + H2O = 5-methylaminomethyl-2-selenouridine(34) in tRNA + phosphate. In terms of biological role, involved in the post-transcriptional modification of the uridine at the wobble position (U34) of tRNA(Lys), tRNA(Glu) and tRNA(Gln). Catalyzes the conversion of 2-thiouridine (S2U-RNA) to 2-selenouridine (Se2U-RNA). Acts in a two-step process involving geranylation of 2-thiouridine (S2U) to S-geranyl-2-thiouridine (geS2U) and subsequent selenation of the latter derivative to 2-selenouridine (Se2U) in the tRNA chain. In Salmonella enteritidis PT4 (strain P125109), this protein is tRNA 2-selenouridine synthase.